We begin with the raw amino-acid sequence, 72 residues long: UPF0270 protein YheU (72 aa).

Belongs to the UPF0270 family.

This chain is UPF0270 protein YheU, found in Escherichia fergusonii (strain ATCC 35469 / DSM 13698 / CCUG 18766 / IAM 14443 / JCM 21226 / LMG 7866 / NBRC 102419 / NCTC 12128 / CDC 0568-73).